Here is a 498-residue protein sequence, read N- to C-terminus: NAD(P)H-quinone oxidoreductase subunit 2, chloroplastic (498 aa).

A run of 14 helical transmembrane segments spans residues Leu18–Leu38, Ile51–Thr71, Phe87–Ser107, Leu111–Ala131, Leu134–Tyr154, Phe168–Gly188, Ile211–Pro231, Pro244–Thr264, Trp278–Val298, Met306–Asp326, Tyr337–Leu357, Phe379–Gly399, Gly411–Leu431, and Ile470–Ile490.

Belongs to the complex I subunit 2 family. NDH is composed of at least 16 different subunits, 5 of which are encoded in the nucleus.

It localises to the plastid. It is found in the chloroplast thylakoid membrane. It catalyses the reaction a plastoquinone + NADH + (n+1) H(+)(in) = a plastoquinol + NAD(+) + n H(+)(out). It carries out the reaction a plastoquinone + NADPH + (n+1) H(+)(in) = a plastoquinol + NADP(+) + n H(+)(out). Its function is as follows. NDH shuttles electrons from NAD(P)H:plastoquinone, via FMN and iron-sulfur (Fe-S) centers, to quinones in the photosynthetic chain and possibly in a chloroplast respiratory chain. The immediate electron acceptor for the enzyme in this species is believed to be plastoquinone. Couples the redox reaction to proton translocation, and thus conserves the redox energy in a proton gradient. The polypeptide is NAD(P)H-quinone oxidoreductase subunit 2, chloroplastic (Adiantum capillus-veneris (Maidenhair fern)).